We begin with the raw amino-acid sequence, 147 residues long: Lipoprotein signal peptidase (147 aa).

4 consecutive transmembrane segments (helical) span residues 10–30, 34–54, 59–79, and 87–107; these read ISIF…IKFL, GIVK…GTAF, FLGS…LVYM, and WFIY…RLIY. Active-site residues include Asp-112 and Asp-130. Residues 121–141 form a helical membrane-spanning segment; the sequence is LHWPAFNVADSAISIGIVLFV.

The protein belongs to the peptidase A8 family.

The protein localises to the cell inner membrane. It carries out the reaction Release of signal peptides from bacterial membrane prolipoproteins. Hydrolyzes -Xaa-Yaa-Zaa-|-(S,diacylglyceryl)Cys-, in which Xaa is hydrophobic (preferably Leu), and Yaa (Ala or Ser) and Zaa (Gly or Ala) have small, neutral side chains.. It functions in the pathway protein modification; lipoprotein biosynthesis (signal peptide cleavage). Functionally, this protein specifically catalyzes the removal of signal peptides from prolipoproteins. The sequence is that of Lipoprotein signal peptidase from Thermodesulfovibrio yellowstonii (strain ATCC 51303 / DSM 11347 / YP87).